Consider the following 188-residue polypeptide: Elongation factor P (188 aa).

At lysine 34 the chain carries N6-(3,6-diaminohexanoyl)-5-hydroxylysine.

It belongs to the elongation factor P family. In terms of processing, may be beta-lysylated on the epsilon-amino group of Lys-34 by the combined action of EpmA and EpmB, and then hydroxylated on the C5 position of the same residue by EpmC (if this protein is present). Lysylation is critical for the stimulatory effect of EF-P on peptide-bond formation. The lysylation moiety may extend toward the peptidyltransferase center and stabilize the terminal 3-CCA end of the tRNA. Hydroxylation of the C5 position on Lys-34 may allow additional potential stabilizing hydrogen-bond interactions with the P-tRNA.

Its subcellular location is the cytoplasm. It participates in protein biosynthesis; polypeptide chain elongation. Its function is as follows. Involved in peptide bond synthesis. Alleviates ribosome stalling that occurs when 3 or more consecutive Pro residues or the sequence PPG is present in a protein, possibly by augmenting the peptidyl transferase activity of the ribosome. Modification of Lys-34 is required for alleviation. The polypeptide is Elongation factor P (Vibrio campbellii (strain ATCC BAA-1116)).